The following is a 574-amino-acid chain: MYND-type zinc finger protein C31F10.10c (574 aa).

2 disordered regions span residues 207-253 (DSGD…QDPR) and 283-307 (MTTPSSPSYSRQTGPASETINDEID). Polar residues-rich tracts occupy residues 243 to 253 (IYSNDSFQDPR) and 283 to 301 (MTTPSSPSYSRQTGPASET). The segment at 482–523 (NLLCNKWEEHSRQFAKCRRCRRTKYCSKECQHQAWPGHSRWC) adopts an MYND-type; degenerate zinc-finger fold. Residues Cys-498, Cys-501, His-519, and Cys-523 each coordinate Zn(2+). The disordered stretch occupies residues 534-574 (KRESSKINSVTESESTASPAASVIPVGTESVTSSTQSDSRL). Positions 542–556 (SVTESESTASPAASV) are enriched in low complexity. Residues 562 to 574 (ESVTSSTQSDSRL) are compositionally biased toward polar residues.

It belongs to the MUB1/samB family.

The protein resides in the nucleus. It is found in the cytoplasm. Its subcellular location is the cytoskeleton. It localises to the microtubule organizing center. The protein localises to the spindle pole body. This chain is MYND-type zinc finger protein C31F10.10c, found in Schizosaccharomyces pombe (strain 972 / ATCC 24843) (Fission yeast).